The sequence spans 667 residues: Interleukin-17 receptor E (667 aa).

The N-terminal stretch at 1–23 (MGSSRLAALLLPLLLIVIDLSDS) is a signal peptide. Topologically, residues 24–454 (AGIGFRHLPH…LLCPDVSYRH (431 aa)) are extracellular. A disordered region spans residues 126-174 (LPRRHLSEKSHHISIPSPDISHKGLRSKRTQPSDPETWESLPRLDSQRH). N-linked (GlcNAc...) asparagine glycosylation is found at N318, N347, and N364. The helical transmembrane segment at 455–475 (LGLLILALLALLTLLGVVLAL) threads the bilayer. Residues 476-667 (TCRRPQSGPG…REAARLADLG (192 aa)) are Cytoplasmic-facing. Residues 487-624 (ARPVLLLHAA…LLRDLPRLLR (138 aa)) form the SEFIR domain.

In terms of assembly, forms heterodimers with IL17RA; the heterodimer binds IL17C. As to expression, predominantly expressed in mucosal tissues with high levels in keratinocytes and colon epithelial cells. Very low expression in dermal fibroblasts. Expressed in various tumor cell lines.

It is found in the cell membrane. Its subcellular location is the cytoplasm. The protein resides in the secreted. Functionally, specific functional receptor for IL17C. May be signaling through the NF-kappa-B and MAPK pathways. May require TRAF3IP2 /ACT1 for signaling. May be a crucial regulator in innate immunity to bacterial pathogens. Isoform 2 and isoform 4 may be either cytoplasmic inactive or dominant active forms. Isoform 3 and isoform 5 may act as soluble decoy receptors. The polypeptide is Interleukin-17 receptor E (IL17RE) (Homo sapiens (Human)).